The chain runs to 426 residues: D-tagatose-1,6-bisphosphate aldolase subunit KbaZ (426 aa).

Belongs to the GatZ/KbaZ family. KbaZ subfamily. In terms of assembly, forms a complex with KbaY.

It participates in carbohydrate metabolism; D-tagatose 6-phosphate degradation; D-glyceraldehyde 3-phosphate and glycerone phosphate from D-tagatose 6-phosphate: step 2/2. Component of the tagatose-1,6-bisphosphate aldolase KbaYZ that is required for full activity and stability of the Y subunit. Could have a chaperone-like function for the proper and stable folding of KbaY. When expressed alone, KbaZ does not show any aldolase activity. In Escherichia coli O6:K15:H31 (strain 536 / UPEC), this protein is D-tagatose-1,6-bisphosphate aldolase subunit KbaZ.